A 251-amino-acid polypeptide reads, in one-letter code: MKKAGLLFLVMIVIAVVAAGIGYWKLTGEESDTLRNIVLEECLPNQQQNQNPSPCAEVKPNAGYVVLKDLNGPLQYLLMPTYRINGTESPLLTDPSTPNFFWLAWQARDFMSKKYGQLVPDRAVSLAINSRTGRTQNHFHIHISCIRPDVREQLDNNLANISSRWLPLPGGLRGHEYLARRVTESELVQRSPFIMLAEEVPEAREHMGSYGLAMVRQSDNSFVLLATQRNLLTLNRASAEEIQDHQCEILR.

A helical membrane pass occupies residues alanine 4–tryptophan 24.

It belongs to the Cdh family.

It localises to the cell inner membrane. The enzyme catalyses a CDP-1,2-diacyl-sn-glycerol + H2O = a 1,2-diacyl-sn-glycero-3-phosphate + CMP + 2 H(+). It functions in the pathway phospholipid metabolism; CDP-diacylglycerol degradation; phosphatidate from CDP-diacylglycerol: step 1/1. The protein is CDP-diacylglycerol pyrophosphatase of Escherichia coli O9:H4 (strain HS).